The primary structure comprises 160 residues: MDLAIIDQTHDGVSRYHHDLVESVLNFAGEALKLPVNTEMSVTFVNNDEIQRYNRDYRGVDKPTDVISFAIEEGEDDFNIISDDAWTEDIAKNIGDIIVSVDIIGAQAEYLGHSYERELGFLVVHGFLHLNGYDHMLGDAEEKEMFDLQREILDNYGLKR.

Residues H125, H129, and H135 each coordinate Zn(2+).

This sequence belongs to the endoribonuclease YbeY family. It depends on Zn(2+) as a cofactor.

Its subcellular location is the cytoplasm. Functionally, single strand-specific metallo-endoribonuclease involved in late-stage 70S ribosome quality control and in maturation of the 3' terminus of the 16S rRNA. The polypeptide is Endoribonuclease YbeY (Leuconostoc citreum (strain KM20)).